A 369-amino-acid polypeptide reads, in one-letter code: UDP-N-acetylglucosamine--N-acetylmuramyl-(pentapeptide) pyrophosphoryl-undecaprenol N-acetylglucosamine transferase (369 aa).

UDP-N-acetyl-alpha-D-glucosamine contacts are provided by residues 15-17 (TGG), asparagine 126, arginine 169, serine 197, and glutamine 299.

It belongs to the glycosyltransferase 28 family. MurG subfamily.

Its subcellular location is the cell inner membrane. It carries out the reaction di-trans,octa-cis-undecaprenyl diphospho-N-acetyl-alpha-D-muramoyl-L-alanyl-D-glutamyl-meso-2,6-diaminopimeloyl-D-alanyl-D-alanine + UDP-N-acetyl-alpha-D-glucosamine = di-trans,octa-cis-undecaprenyl diphospho-[N-acetyl-alpha-D-glucosaminyl-(1-&gt;4)]-N-acetyl-alpha-D-muramoyl-L-alanyl-D-glutamyl-meso-2,6-diaminopimeloyl-D-alanyl-D-alanine + UDP + H(+). It functions in the pathway cell wall biogenesis; peptidoglycan biosynthesis. In terms of biological role, cell wall formation. Catalyzes the transfer of a GlcNAc subunit on undecaprenyl-pyrophosphoryl-MurNAc-pentapeptide (lipid intermediate I) to form undecaprenyl-pyrophosphoryl-MurNAc-(pentapeptide)GlcNAc (lipid intermediate II). The sequence is that of UDP-N-acetylglucosamine--N-acetylmuramyl-(pentapeptide) pyrophosphoryl-undecaprenol N-acetylglucosamine transferase from Methylorubrum extorquens (strain PA1) (Methylobacterium extorquens).